Reading from the N-terminus, the 525-residue chain is 2-isopropylmalate synthase (525 aa).

One can recognise a Pyruvate carboxyltransferase domain in the interval 5 to 267 (VIIFDTTLRD…HTGIHHQEIY (263 aa)). Residues D14, H202, H204, and N238 each contribute to the Mn(2+) site. A regulatory domain region spans residues 392-525 (RLEYFSVQSS…NNSQDMQETV (134 aa)).

This sequence belongs to the alpha-IPM synthase/homocitrate synthase family. LeuA type 1 subfamily. Homodimer. Mn(2+) is required as a cofactor.

Its subcellular location is the cytoplasm. It catalyses the reaction 3-methyl-2-oxobutanoate + acetyl-CoA + H2O = (2S)-2-isopropylmalate + CoA + H(+). Its pathway is amino-acid biosynthesis; L-leucine biosynthesis; L-leucine from 3-methyl-2-oxobutanoate: step 1/4. Catalyzes the condensation of the acetyl group of acetyl-CoA with 3-methyl-2-oxobutanoate (2-ketoisovalerate) to form 3-carboxy-3-hydroxy-4-methylpentanoate (2-isopropylmalate). In Sodalis glossinidius (strain morsitans), this protein is 2-isopropylmalate synthase.